A 368-amino-acid chain; its full sequence is Phospho-N-acetylmuramoyl-pentapeptide-transferase (368 aa).

Transmembrane regions (helical) follow at residues 23–43 (YITFRAGAAAVTALIIILVFG), 72–92 (IPTMGGLMIILAIEVSGLLWA), 94–114 (IAEPFVWMVLLAIIWMGAVGF), 139–159 (VALGLIIGGYTFFDPTLSVLL), 170–190 (ITVDYGIWYIPLAIFIVTAVS), 201–221 (GLAAGSTAISVFSLAGFAYLT), 238–258 (AGEVTILSMAIVAACIGFLWF), 265–286 (VFMGDTGSLALGSAVAVIALLI), and 345–365 (KIVIRFWIIEVLLVLTSLLTL).

This sequence belongs to the glycosyltransferase 4 family. MraY subfamily. The cofactor is Mg(2+).

The protein localises to the cell inner membrane. It catalyses the reaction UDP-N-acetyl-alpha-D-muramoyl-L-alanyl-gamma-D-glutamyl-meso-2,6-diaminopimeloyl-D-alanyl-D-alanine + di-trans,octa-cis-undecaprenyl phosphate = di-trans,octa-cis-undecaprenyl diphospho-N-acetyl-alpha-D-muramoyl-L-alanyl-D-glutamyl-meso-2,6-diaminopimeloyl-D-alanyl-D-alanine + UMP. It functions in the pathway cell wall biogenesis; peptidoglycan biosynthesis. Catalyzes the initial step of the lipid cycle reactions in the biosynthesis of the cell wall peptidoglycan: transfers peptidoglycan precursor phospho-MurNAc-pentapeptide from UDP-MurNAc-pentapeptide onto the lipid carrier undecaprenyl phosphate, yielding undecaprenyl-pyrophosphoryl-MurNAc-pentapeptide, known as lipid I. This Chloroherpeton thalassium (strain ATCC 35110 / GB-78) protein is Phospho-N-acetylmuramoyl-pentapeptide-transferase.